We begin with the raw amino-acid sequence, 142 residues long: Putative pre-16S rRNA nuclease (142 aa).

Belongs to the YqgF nuclease family.

The protein resides in the cytoplasm. Its function is as follows. Could be a nuclease involved in processing of the 5'-end of pre-16S rRNA. This chain is Putative pre-16S rRNA nuclease, found in Desulfitobacterium hafniense (strain DSM 10664 / DCB-2).